Consider the following 206-residue polypeptide: Large ribosomal subunit protein uL3 (206 aa).

It belongs to the universal ribosomal protein uL3 family. In terms of assembly, part of the 50S ribosomal subunit. Forms a cluster with proteins L14 and L19.

In terms of biological role, one of the primary rRNA binding proteins, it binds directly near the 3'-end of the 23S rRNA, where it nucleates assembly of the 50S subunit. The protein is Large ribosomal subunit protein uL3 of Thermus thermophilus (strain ATCC BAA-163 / DSM 7039 / HB27).